The primary structure comprises 101 residues: Urease subunit beta (101 aa).

The protein belongs to the urease beta subunit family. Heterotrimer of UreA (gamma), UreB (beta) and UreC (alpha) subunits. Three heterotrimers associate to form the active enzyme.

It localises to the cytoplasm. The catalysed reaction is urea + 2 H2O + H(+) = hydrogencarbonate + 2 NH4(+). The protein operates within nitrogen metabolism; urea degradation; CO(2) and NH(3) from urea (urease route): step 1/1. The protein is Urease subunit beta of Allorhizobium ampelinum (strain ATCC BAA-846 / DSM 112012 / S4) (Agrobacterium vitis (strain S4)).